Here is a 422-residue protein sequence, read N- to C-terminus: UDP-N-acetylglucosamine 1-carboxyvinyltransferase (422 aa).

22–23 (KN) contributes to the phosphoenolpyruvate binding site. UDP-N-acetyl-alpha-D-glucosamine is bound at residue R93. C117 serves as the catalytic Proton donor. The residue at position 117 (C117) is a 2-(S-cysteinyl)pyruvic acid O-phosphothioketal. UDP-N-acetyl-alpha-D-glucosamine contacts are provided by residues 122 to 126 (RPVDQ), D305, and I327.

Belongs to the EPSP synthase family. MurA subfamily.

The protein localises to the cytoplasm. It carries out the reaction phosphoenolpyruvate + UDP-N-acetyl-alpha-D-glucosamine = UDP-N-acetyl-3-O-(1-carboxyvinyl)-alpha-D-glucosamine + phosphate. It participates in cell wall biogenesis; peptidoglycan biosynthesis. Cell wall formation. Adds enolpyruvyl to UDP-N-acetylglucosamine. In Bordetella petrii (strain ATCC BAA-461 / DSM 12804 / CCUG 43448), this protein is UDP-N-acetylglucosamine 1-carboxyvinyltransferase.